A 421-amino-acid polypeptide reads, in one-letter code: MVADVLLTHFNQLFCLNDPGHPLTGQEMKKATIVEDGYIAIKDSLIVALGSGEPDAELVGPQTIMRSYKGKIATPGIIDCHTHLVYGGSREHEFAKKLAGVSYLDILAQGGGILSTVRATRSASFDNLYQKSKRLLDYMLLHGVTTVEAKSGYGLDWETEKRQLDVVAALEKDHPIDLVSTFMAAHAIPEEYKGNPKAYLDVIIKDMLPVVKEENLAEFCDIFCEKNVFTADESRYLLSKAKEMGFKLRIHADEIASIGGVDVAAELSAVSAEHLMMITDDGIAKLIGAGVIGNLLPATTFSLMEDTYAPARKMIDAGMAITLSTDSNPGSCPTANMQFVMQLGCFMLRLTPIEVLNAVTINAAYSVNRQERVGSLTVGKEADIAIFDAPNIDYPFYFFATNLIHQVYKKGQLTVDRGRIL.

Fe(3+) contacts are provided by His81 and His83. Positions 81 and 83 each coordinate Zn(2+). 4-imidazolone-5-propanoate-binding residues include Arg90, Tyr153, and His186. Tyr153 contributes to the N-formimidoyl-L-glutamate binding site. His251 serves as a coordination point for Fe(3+). His251 contributes to the Zn(2+) binding site. Position 254 (Glu254) interacts with 4-imidazolone-5-propanoate. Position 326 (Asp326) interacts with Fe(3+). Residue Asp326 coordinates Zn(2+). Asn328 and Gly330 together coordinate N-formimidoyl-L-glutamate. Ser331 provides a ligand contact to 4-imidazolone-5-propanoate.

Belongs to the metallo-dependent hydrolases superfamily. HutI family. The cofactor is Zn(2+). Requires Fe(3+) as cofactor.

It is found in the cytoplasm. The enzyme catalyses 4-imidazolone-5-propanoate + H2O = N-formimidoyl-L-glutamate. It participates in amino-acid degradation; L-histidine degradation into L-glutamate; N-formimidoyl-L-glutamate from L-histidine: step 3/3. In terms of biological role, catalyzes the hydrolytic cleavage of the carbon-nitrogen bond in imidazolone-5-propanoate to yield N-formimidoyl-L-glutamate. It is the third step in the universal histidine degradation pathway. In Streptococcus pyogenes serotype M4 (strain MGAS10750), this protein is Imidazolonepropionase.